Here is a 189-residue protein sequence, read N- to C-terminus: Large ribosomal subunit protein uL6 (189 aa).

This sequence belongs to the universal ribosomal protein uL6 family. As to quaternary structure, part of the 50S ribosomal subunit.

Functionally, this protein binds to the 23S rRNA, and is important in its secondary structure. It is located near the subunit interface in the base of the L7/L12 stalk, and near the tRNA binding site of the peptidyltransferase center. The polypeptide is Large ribosomal subunit protein uL6 (Microcystis aeruginosa (strain NIES-843 / IAM M-2473)).